The sequence spans 142 residues: uncharacterized protein (142 aa).

Residues 1–26 form the signal peptide; sequence MITEFIKSFLLFFFLPFFLSMPMIFA.

This is an uncharacterized protein from Schizosaccharomyces pombe (strain 972 / ATCC 24843) (Fission yeast).